The following is a 102-amino-acid chain: Gonadotropin subunit beta-1 (102 aa).

Disulfide bonds link C8-C51, C20-C65, C31-C77, C35-C79, and C82-C89. N-linked (GlcNAc...) asparagine glycosylation occurs at N12.

The protein belongs to the glycoprotein hormones subunit beta family. Heterodimer of an alpha and a beta chain.

It is found in the secreted. Its function is as follows. Involved in gametogenesis and steroidogenesis. This Thunnus obesus (Bigeye tuna) protein is Gonadotropin subunit beta-1 (cgba).